Here is a 793-residue protein sequence, read N- to C-terminus: MDLEFGRGMRSPQRDSWKTTLLLAYQSLGVVYGDLSISPLYVFKSTFAEDIQHSETNEEIFGVLSFVFWTLTLIPLIKYVSIVLRADDNGEGGTFALYSLICRHANVSLLPNRQIADEELSTYKLECSSERTDKSCIKVWLEKHKKLHTALLIMVLIGTCMVIGDGVLTPAISVFSAVSGLEFSLSKDHREYAVIPITCVILAFLFALQHYGTHRVGFLFAPIVLAWLICMSALGLYNIIHWNPHVYQALNPCYMFKFLKKTRKYGWMSLGGILLCMTGSEAMFADLGHFSYSAIQLAFTSLVYPALILAYMGQAAYLSKHHDFYSNSQVGFYIAVPDKVRWPVLVLAILASVVGSQAIISGTFSIINQSQSLSCFPRVKVVHTSDKIHGQIYIPEINWLLMILCIAVTVGFRDTKHMGNASGLAVITVMLVTTCLTSLVIMLCWRRPPVLALCFLLFFGSVEALYFSASLIKFLEGAWLPILLALFLMAVMLVWHYTTIKKYEFDLHNKVTLEWLLALGDKLGMVRVPGIGLVYTDLTSGVPANFSRFVTNLPAFHQVLVFVCVKSVPVPYVFPAERYLIGRVGPPGHRSYRCIVRYGYRDVHQDVDSFETELVESLATFIKLDASYRCSDASGGGGDHEPEEERGTRLAVIGSSHASYDIQDSVQHSSAASVETTTTRRRSGGGDDDGSPGGGGGRAKQVRFFIDSHVASPEAADNKQVAEELEALAAARDAGTAFILGHSHVQCKPGSSLLKRLAVDVGYNFLRRNCRGPDVALRVPPASLLEVGMVYVL.

Residues 1-22 are Cytoplasmic-facing; the sequence is MDLEFGRGMRSPQRDSWKTTLL. The chain crosses the membrane as a helical span at residues 23–43; the sequence is LAYQSLGVVYGDLSISPLYVF. At 44-59 the chain is on the extracellular side; sequence KSTFAEDIQHSETNEE. Residues 60-80 form a helical membrane-spanning segment; sequence IFGVLSFVFWTLTLIPLIKYV. Over 81-151 the chain is Cytoplasmic; that stretch reads SIVLRADDNG…EKHKKLHTAL (71 aa). The helical transmembrane segment at 152-172 threads the bilayer; that stretch reads LIMVLIGTCMVIGDGVLTPAI. Residues 173 to 191 lie on the Extracellular side of the membrane; the sequence is SVFSAVSGLEFSLSKDHRE. A helical membrane pass occupies residues 192 to 212; it reads YAVIPITCVILAFLFALQHYG. Topologically, residues 213–215 are cytoplasmic; it reads THR. A helical transmembrane segment spans residues 216–236; that stretch reads VGFLFAPIVLAWLICMSALGL. Residues 237–264 lie on the Extracellular side of the membrane; that stretch reads YNIIHWNPHVYQALNPCYMFKFLKKTRK. A helical membrane pass occupies residues 265-285; it reads YGWMSLGGILLCMTGSEAMFA. The Cytoplasmic portion of the chain corresponds to 286–292; sequence DLGHFSY. Residues 293 to 313 traverse the membrane as a helical segment; the sequence is SAIQLAFTSLVYPALILAYMG. The Extracellular segment spans residues 314–343; sequence QAAYLSKHHDFYSNSQVGFYIAVPDKVRWP. Residues 344–364 form a helical membrane-spanning segment; it reads VLVLAILASVVGSQAIISGTF. Residues 365–391 lie on the Cytoplasmic side of the membrane; sequence SIINQSQSLSCFPRVKVVHTSDKIHGQ. Residues 392-412 traverse the membrane as a helical segment; it reads IYIPEINWLLMILCIAVTVGF. Over 413-422 the chain is Extracellular; that stretch reads RDTKHMGNAS. A glycan (N-linked (GlcNAc...) asparagine) is linked at N420. The helical transmembrane segment at 423 to 443 threads the bilayer; that stretch reads GLAVITVMLVTTCLTSLVIML. Topologically, residues 444-448 are cytoplasmic; the sequence is CWRRP. The chain crosses the membrane as a helical span at residues 449–469; it reads PVLALCFLLFFGSVEALYFSA. Topologically, residues 470 to 473 are extracellular; the sequence is SLIK. The chain crosses the membrane as a helical span at residues 474–494; the sequence is FLEGAWLPILLALFLMAVMLV. At 495-793 the chain is on the cytoplasmic side; that stretch reads WHYTTIKKYE…LLEVGMVYVL (299 aa). The span at 664–675 shows a compositional bias: polar residues; it reads DSVQHSSAASVE. A disordered region spans residues 664–698; sequence DSVQHSSAASVETTTTRRRSGGGDDDGSPGGGGGR.

The protein belongs to the HAK/KUP transporter (TC 2.A.72.3) family.

It localises to the membrane. In terms of biological role, high-affinity potassium transporter. This Oryza sativa subsp. japonica (Rice) protein is Putative potassium transporter 8 (HAK8).